A 296-amino-acid chain; its full sequence is Haloalkane dehalogenase (296 aa).

The AB hydrolase-1 domain maps to 31–155 (PILFQHGNPT…QDRDLFQAFR (125 aa)). Asp108 (nucleophile) is an active-site residue. The Proton donor role is filled by Glu132. Residue His272 is the Proton acceptor of the active site.

This sequence belongs to the haloalkane dehalogenase family. Type 2 subfamily. As to quaternary structure, monomer.

The protein localises to the periplasm. It carries out the reaction 1-haloalkane + H2O = a halide anion + a primary alcohol + H(+). The catalysed reaction is (3R,6R)-1,3,4,6-tetrachlorocyclohexa-1,4-diene + 2 H2O = 2,5-dichlorocyclohexa-2,5-dien-1,4-diol + 2 chloride + 2 H(+). It participates in xenobiotic degradation; gamma-hexachlorocyclohexane degradation. In terms of biological role, catalyzes hydrolytic cleavage of carbon-halogen bonds in halogenated aliphatic compounds, leading to the formation of the corresponding primary alcohols, halide ions and protons. Is involved in the degradation of the important environmental pollutant gamma-hexachlorocyclohexane (gamma-HCH or lindane) as it also catalyzes conversion of 1,3,4,6-tetrachloro-1,4-cyclohexadiene (1,4-TCDN) to 2,5-dichloro-2,5-cyclohexadiene-1,4-diol (2,5-DDOL) via the intermediate 2,4,5-trichloro-2,5-cyclohexadiene-1-ol (2,4,5-DNOL). In Sphingobium indicum (strain DSM 16412 / CCM 7286 / MTCC 6364 / B90A), this protein is Haloalkane dehalogenase.